The primary structure comprises 219 residues: Transmembrane protein 179B (219 aa).

Transmembrane regions (helical) follow at residues 9 to 29 (VELLLFTAAFLCGALAAATLT), 65 to 85 (FVAGASGILALYCLLLLFFWV), 98 to 118 (IGLRIALAISATAIFLILVSA), and 162 to 182 (LHTAETSSWVNLILWCLALLL). The residue at position 206 (serine 206) is a Phosphoserine.

It belongs to the TMEM179 family.

Its subcellular location is the membrane. This chain is Transmembrane protein 179B (Tmem179b), found in Mus musculus (Mouse).